We begin with the raw amino-acid sequence, 549 residues long: Sorting nexin-33 (549 aa).

An SH3 domain is found at 1–61; that stretch reads MALKARALYS…PASYVEILRP (61 aa). Residues 66-83 are compositionally biased toward polar residues; sequence VQVDYSGHTQGYTDSPHQ. Residues 66 to 137 form a disordered region; sequence VQVDYSGHTQ…RPEYTHRPRP (72 aa). Positions 86–101 are enriched in acidic residues; sequence YDDDEEDDDDWDDWDD. The segment covering 110 to 119 has biased composition (polar residues); it reads SGSNGVSRSQ. Positions 127–137 are enriched in basic and acidic residues; that stretch reads PRPEYTHRPRP. Residues 205 to 315 enclose the PX domain; that stretch reads FSCSVEEPTK…HFLSCQDEKQ (111 aa). Positions 346–549 constitute a BAR domain; that stretch reads LQDVEERVDV…EKTLHMYDDL (204 aa).

The protein belongs to the sorting nexin family.

Its subcellular location is the cytoplasm. The protein resides in the cytosol. It localises to the membrane. It is found in the cytoplasmic vesicle membrane. Plays a role in the reorganization of the cytoskeleton, endocytosis and cellular vesicle trafficking, both during interphase and at the end of mitotic cell divisions. Required for efficient progress through mitosis and cytokinesis. Required for normal formation of the cleavage furrow at the end of mitosis. Modulates endocytosis of cell-surface proteins. Promotes membrane tubulation (in vitro). May promote the formation of macropinosomes. This is Sorting nexin-33 (snx33) from Xenopus tropicalis (Western clawed frog).